The primary structure comprises 147 residues: Large ribosomal subunit protein uL15 (147 aa).

Positions 1-28 (MIRRRKKVRKLRGSHTHGWGCKKKHRGG) are enriched in basic residues. The segment at 1-43 (MIRRRKKVRKLRGSHTHGWGCKKKHRGGGSKGGRGMAGTGKRN) is disordered. Over residues 29-38 (GSKGGRGMAG) the composition is skewed to gly residues.

It belongs to the universal ribosomal protein uL15 family. In terms of assembly, part of the 50S ribosomal subunit.

Functionally, binds to the 23S rRNA. This is Large ribosomal subunit protein uL15 from Pyrococcus horikoshii (strain ATCC 700860 / DSM 12428 / JCM 9974 / NBRC 100139 / OT-3).